Here is a 788-residue protein sequence, read N- to C-terminus: ATP-dependent 6-phosphofructokinase, platelet type (788 aa).

Position 1 is an N-acetylmethionine (Met1). An N-terminal catalytic PFK domain 1 region spans residues 1–399 (MSDQDSSTSS…NLNTYKRLAI (399 aa)). Phosphoserine occurs at positions 2, 6, 12, and 21. ATP is bound by residues Gly34, 97–98 (RC), and 127–130 (GDGS). Asp128 is a binding site for Mg(2+). A Phosphoserine modification is found at Ser142. Substrate contacts are provided by residues 173-175 (SID), Arg210, 217-219 (MGR), Glu273, Arg301, and 307-310 (HVQR). Asp175 serves as the catalytic Proton acceptor. Residue Ser386 is modified to Phosphoserine. Lys395 carries the post-translational modification N6-acetyllysine. Residues 400–411 (KEPDDKIPKSNC) are interdomain linker. Residues 412–788 (NVAIINVGAP…VHNHGELSAI (377 aa)) are C-terminal regulatory PFK domain 2. Arg481 is a beta-D-fructose 2,6-bisphosphate binding site. Lys486 bears the N6-acetyllysine mark. Beta-D-fructose 2,6-bisphosphate is bound by residues 538-542 (TVSNN), Arg576, 583-585 (MGG), and Glu639. The O-linked (GlcNAc) serine glycan is linked to Ser540. At Tyr651 the chain carries Phosphotyrosine. Residues Arg665 and 671–674 (HMQQ) each bind beta-D-fructose 2,6-bisphosphate. Lys688 bears the N6-acetyllysine mark. Arg744 is a beta-D-fructose 2,6-bisphosphate binding site.

It belongs to the phosphofructokinase type A (PFKA) family. ATP-dependent PFK group I subfamily. Eukaryotic two domain clade 'E' sub-subfamily. Homo- and heterotetramers. Phosphofructokinase (PFK) enzyme functions as a tetramer composed of different combinations of 3 types of subunits, called PFKM (M), PFKL (L) and PFKP (P). The composition of the PFK tetramer differs according to the tissue type it is present in. The kinetic and regulatory properties of the tetrameric enzyme are dependent on the subunit composition, hence can vary across tissues. Interacts with ATG4B; promoting phosphorylation of ATG4B. The cofactor is Mg(2+). GlcNAcylation decreases enzyme activity. Post-translationally, phosphorylation at Ser-386 promotes interaction with ATG4B. In terms of tissue distribution, expressed at high level in neuroendocrine tissues.

It is found in the cytoplasm. It catalyses the reaction beta-D-fructose 6-phosphate + ATP = beta-D-fructose 1,6-bisphosphate + ADP + H(+). Its pathway is carbohydrate degradation; glycolysis; D-glyceraldehyde 3-phosphate and glycerone phosphate from D-glucose: step 3/4. Its activity is regulated as follows. Allosterically activated by ADP, AMP, or fructose 2,6-bisphosphate, and allosterically inhibited by ATP or citrate. Functionally, catalyzes the phosphorylation of D-fructose 6-phosphate to fructose 1,6-bisphosphate by ATP, the first committing step of glycolysis. The polypeptide is ATP-dependent 6-phosphofructokinase, platelet type (Pfkp) (Rattus norvegicus (Rat)).